Reading from the N-terminus, the 206-residue chain is Small ribosomal subunit protein uS4 (206 aa).

One can recognise an S4 RNA-binding domain in the interval 96–156 (GRLDNVVYRM…EKAKKQSRVK (61 aa)).

This sequence belongs to the universal ribosomal protein uS4 family. In terms of assembly, part of the 30S ribosomal subunit. Contacts protein S5. The interaction surface between S4 and S5 is involved in control of translational fidelity.

One of the primary rRNA binding proteins, it binds directly to 16S rRNA where it nucleates assembly of the body of the 30S subunit. Its function is as follows. With S5 and S12 plays an important role in translational accuracy. The sequence is that of Small ribosomal subunit protein uS4 from Cronobacter sakazakii (strain ATCC BAA-894) (Enterobacter sakazakii).